We begin with the raw amino-acid sequence, 1120 residues long: Transcriptional repressor NF-X1 (1120 aa).

The segment at 9–26 is interaction with PABPC1 and PABC4; that stretch reads GTFKFNTDAAEFIPQEKK. The interval 22-295 is disordered; sequence PQEKKNSGLN…LNERPAKSTC (274 aa). Phosphoserine occurs at positions 50, 82, and 95. Polar residues predominate over residues 73–106; sequence YHPSGSKPKSQQTSFQSSPCNKSPKSHGLQNQPW. Positions 111-120 are enriched in basic residues; sequence NEKHHIRVKK. The span at 124–141 shows a compositional bias: polar residues; the sequence is LAEQTSDTAGLESSTRSE. A phosphoserine mark is found at S129 and S150. Composition is skewed to basic and acidic residues over residues 142–159, 188–202, 222–254, and 282–291; these read SGTD…KEVV, LKCE…KPED, SSRK…EGAR, and PKDDLNERPA. Residue S326 is modified to Phosphoserine. The segment at 358 to 409 adopts an RING-type; atypical zinc-finger fold; that stretch reads CMVCCELVRVTAPVWSCQSCYHVFHLNCIKKWARSPASQADGQSGWRCPACQ. 8 NF-X1-type zinc fingers span residues 453 to 471, 506 to 525, 567 to 586, 632 to 655, 694 to 713, 721 to 740, 832 to 854, and 863 to 884; these read CPHS…PCPA, CGQH…PCQI, CGNH…QCPR, CGSL…PCSR, CGRH…KCPL, CGLH…TCWQ, CGMH…PCKQ, and CGHP…ACKA. The region spanning 994-1062 is the R3H domain; that stretch reads LKFVSDVEKE…KRNVVVTAIR (69 aa). Residues 1081–1109 are disordered; the sequence is QARPPPPIPHHRHQSDKNPGSSNLQKITK. Over residues 1097–1106 the composition is skewed to polar residues; the sequence is KNPGSSNLQK.

This sequence belongs to the NFX1 family. Isoform 1 interacts with PABPC1 and PABPC4. As to quaternary structure, (Microbial infection) Isoform 1 and isoform 3 interact with human papillomavirus (HPV) type-16 E6 oncoprotein. Post-translationally, isoform 3 is polyubiquitinated in the presence of HPV16 E6 protein; which leads to proteasomal degradation. Isoform 1 is not polyubiquitinated.

Its subcellular location is the nucleus. Binds to the X-box motif of MHC class II genes and represses their expression. May play an important role in regulating the duration of an inflammatory response by limiting the period in which MHC class II molecules are induced by interferon-gamma. Isoform 3 binds to the X-box motif of TERT promoter and represses its expression. Together with PABPC1 or PABPC4, isoform 1 acts as a coactivator for TERT expression. Mediates E2-dependent ubiquitination. The chain is Transcriptional repressor NF-X1 (NFX1) from Homo sapiens (Human).